The sequence spans 383 residues: MSSATTTDVRKGLYGVIADYTAVSKVMPETNSLTYRGYAVEDLVENCSFEEVFYLLWHGELPTAQQLAEFNERGRSYRSLDAGLISLIHSLPKEAHPMDVMRTAVSYMGTKDSEYFTTDSEHIRKVGHTLLAQLPMVLAMDIRRRKGLDIIAPDSSKSVAENLLSMVFGTGPESPASNPADVRDFEKSLILYAEHSFNASTFTARVITSTKSDVYSAITGAIGALKGPLHGGANEFVMHTMLAIDDPNKAAAWINNALDNKNVVMGFGHRVYKRGDSRVPSMEKSFRELAARHDGEKWVAMYENMRDAMDARTGIKPNLDFPAGPAYHLLGFPVDFFTPLFVIARVAGWTAHIVEQYENNSLIRPLSEYNGEEQREVAPIEKR.

Residues Arg-73 and His-195 each contribute to the substrate site. The active site involves His-230. 263-267 serves as a coordination point for CoA; the sequence is VVMGF. His-269 is a catalytic residue. Arg-278 contacts substrate. Asp-320 is a catalytic residue. Residues Arg-345 and Arg-364 each coordinate substrate.

It belongs to the citrate synthase family. As to quaternary structure, homodimer.

It carries out the reaction propanoyl-CoA + oxaloacetate + H2O = (2S,3S)-2-methylcitrate + CoA + H(+). It catalyses the reaction oxaloacetate + acetyl-CoA + H2O = citrate + CoA + H(+). The protein operates within organic acid metabolism; propanoate degradation. It participates in carbohydrate metabolism; tricarboxylic acid cycle; isocitrate from oxaloacetate: step 1/2. Functionally, involved in the catabolism of short chain fatty acids (SCFA) via the tricarboxylic acid (TCA)(acetyl degradation route) and via the 2-methylcitrate cycle I (propionate degradation route). Catalyzes the Claisen condensation of propionyl-CoA and oxaloacetate (OAA) to yield 2-methylcitrate (2-MC) and CoA. Also catalyzes the condensation of oxaloacetate with acetyl-CoA but with a lower specificity. The sequence is that of 2-methylcitrate synthase 2 (prpC2) from Corynebacterium glutamicum (strain ATCC 13032 / DSM 20300 / JCM 1318 / BCRC 11384 / CCUG 27702 / LMG 3730 / NBRC 12168 / NCIMB 10025 / NRRL B-2784 / 534).